Reading from the N-terminus, the 301-residue chain is Protein ARMCX6 (301 aa).

Residues 1–6 form a mitochondrion outer membrane (MOM)-targeting sequence region; it reads MGRARE. Residues 1 to 7 lie on the Mitochondrial intermembrane side of the membrane; that stretch reads MGRAREM. A helical; Signal-anchor membrane pass occupies residues 8–25; it reads GWMAAGLMIGAGACYCMY. The mitochondrion outer membrane (MOM)-targeting sequence stretch occupies residues 26–36; that stretch reads KLTMGRSEGNE. The Cytoplasmic segment spans residues 26-301; sequence KLTMGRSEGN…REMLVEAISP (276 aa). Positions 69–101 are disordered; the sequence is WSEDGDWDEPGAPGGTEDRRSGGGKANRAHPIK.

Belongs to the eutherian X-chromosome-specific Armcx family. In terms of tissue distribution, highly expressed in the developing neural tissues, neural crest derivatives and hind limbs. Also widely expressed in the adult nervous tissue, especially in the forebrain, including the cerebral cortex, hippocampus and thalamus.

It is found in the mitochondrion. The protein localises to the mitochondrion outer membrane. In terms of biological role, may regulate the dynamics and distribution of mitochondria in neural cells. The sequence is that of Protein ARMCX6 (Armcx6) from Mus musculus (Mouse).